The chain runs to 530 residues: AAA-ATPase At3g28510 (530 aa).

A helical membrane pass occupies residues 5–25; it reads GAIWGITGTTVTSFMFFWAIY. 250–257 contributes to the ATP binding site; the sequence is GPPGTGKS. Disordered stretches follow at residues 312 to 339 and 463 to 530; these read QRKKKKEEDEEEDGEEKKEGEKKPKVDD and KARK…KSDS. Basic and acidic residues-rich tracts occupy residues 326–339 and 463–511; these read EEKKEGEKKPKVDD and KARK…KEEN. Positions 512–523 are enriched in polar residues; sequence GNVSQQNGNSID.

Belongs to the AAA ATPase family. BCS1 subfamily. The cofactor is Mg(2+).

The protein resides in the membrane. The enzyme catalyses ATP + H2O = ADP + phosphate + H(+). The chain is AAA-ATPase At3g28510 from Arabidopsis thaliana (Mouse-ear cress).